The primary structure comprises 2971 residues: MQRWIFCNIVLHILIYLAEFSHEQESYSSNEKIRKDYSDDNNYEPTPSYEKRKKEYGKDESYIKNYRGNNFSYDLSKNSSIFLHMGNGSNSKTLKRCNKKKNIKTNFLRPIEEEKTVLNNYVYKGVNFLDTIKRNDSSYKFDVYKDTSFLKNREYKELITMQYDYAYLEATKEVLYLIPKDKDYHKFYKNELEKILFNLKDSLKLLREGYIQSKLEMIRIHSDIDILNEFHQGNIINDNYFNNEIKKKKEDMEKYIREYNLYIYKYENQLKIKIQKLTNEVSINLNKSTCEKNCYNYILKLEKYKNIIKDKINKWKDLPEIYIDDKSFSYTFLKDVINNKIDIYKTISSFISTQKQLYYFEYIYIMNKNTLNLLSYNIQKTDINSSSKYTYTKSHFLKDNHILLSKYYTAKFIDILNKTYYYNLYKNKILLFNKYIIKLRNDLKEYAFKSIQFIQDKIKKHKDELSIENILQEVNNIYIKYDTSINEISKYNNLIINTDLQIVQQKLLEIKQKKNDITHKVQLINHIYKNIHDEILNKKNNEITKIIINNIKDHKKDLQDLLLFIQQIKQYNILTDHKITQCNNYYKEIIKMKEDINHIHIYIQPILNNLHTLKQVQNNKIKYEEHIKQILQKIYDKKESLKKIILLKDEAQLDITLLDDLIQKQTKKQTQTQTQTQKQTLIQNNETIQLISGQEDKHESNPFNHIQTYIQQKDTQNKNIQNLLKSLYNGNINTFIDTISKYILKQKDIELTQHVYTDEKINDYLEEIKNEQNKIDKTIDDIKIQETLKQITHIVNNIKTIKKDLLKEFIQHLIKYMNERYQNMQQGYNNLTNYINQYEEENNNMKQYITTIRNIQKIYYDNIYAKEKEIRSGQYYKDFITSRKNIYNIRENISKNVDMIKNEEKKKIQNCVDKYNSIKQYVKMLKNGDTQDENNNNNNDIYDKLIVPLDSIKQNIDKYNTEHNFITFTNKINTHNKKNQEMMEEFIYAYKRLKILKILNISLKACEKNNKSINTLNDKTQELKKIVTHEIDLLQKDILTSQISNKNVLLLNDLLKEIEQYIIDVHKLKKKSNDLFTYYEQSKNYFYFKNKKDNFDIQKTINKMNEWLAIKNYINEINKNYQTLYEKKINVLLHNSKSYVQYFYDHIINLILQKKNYLENTLKTKIQDNEHSLYALQQNEEYQKVKNEKDQNEIKKIKQLIEKNKNDILTYENNIEQIEQKNIELKTNAQNKDDQIVNTLNEVKKKIIYTYEKVDNQISNVLKNYEEGKVEYDKNVVQNVNDADDTNDIDEINDIDEINDIDEINDIDEINDIDEIKDIDHIKHFDDTKHFDDIYHADDTRDEYHIALSNYIKTELRNINLQEIKNNIIKIFKEFKSAHKEIKKESEQINKEFTKMDVVINQLRDIDRQMLDLYKELDEKYSEFNKTKIEEINNIRENINNVEIWYEKNIIEYFLRHMNDQKDKAAKYMENIDTYKNNIEIISKQINPENYVETLNKSNMYSYVEKANDLFYKQINNIIINSNQLKNEAFTIDELQNIQKNRKNLLTKKQQIIQYTNEIENIFNEIKNINNILVLTNYKSILQDISQNINHVSIYTEQLHNLYIKLEEEKEQMKTLYHKSNVLHNQINFNEDAFINNLLINIEKIKNDITHIKEKTNIYMIDVNKSKNNAQLYFHNTLRGNEKIEYLKNLKNSTNQQITLQELKQVQENVEKVKDIYNQTIKYEEEIKKNYHIITDYENKINDILHNSFIKQINMESSNNKKQTKQIIDIINDKTFEEHIKTSKTKINMLKEQSQMKHIDKTLLNEQALKLFVDINSTNNNLDNMLSEINSIQNNIHTYIQEANKSFDKFKIICDQNVNDLLNKLSLGDLNYMNHLKNLQNEIRNMNLEKNFMLDKSKKIDEEEKKLDILKVNISNINNSLDKLKKYYEEALFQKVKEKAEIQKENIEKIKQEINTLSDVFKKPFFFIQLNTDSSQHEKDINNNVETYKNNIDEIYNVFIQSYNLIQKYSSEIFSSTLNYIQTKEIKEKSIKEQNQLNQNEKEASVLLKNIKINETIKLFKQIKNERQNDVHNIKEDYNLLQQYLNYMKNEMEQLKKYKNDVHMDKNYVENNNGEKEKLLKETISSYYDKINNINNKLYIYKNKEDTYFNNMIKVSEILNIIIKKKQQNEQRIVINAEYDSSLINKDEEIKKEINNQIIELNKHNENISNIFKDIQNIKKQSQDIITNMNDMYKSTILLVDIIQKKEEALNKQKNILRNIDNILNKKENIIDKVIKCNCDDYKDILIQNETEYQKLQNINHTYEEKKKSIDILKIKNIKQKNIQEYKNKLEQMNTIINQSIEQHVFINADILQNEKIKLEEIIKNLDILDEQIMTYHNSIDELYKLGIQCDNHLITTISVVVNKNTTKIMIHIKKQKEDIQKINNYIQTNYNIINEEALQFHRLYGHNLISEDDKNNLVHIIKEQKNIYTQKEIDISKIIKHVKKGLYSLNEHDMNHDTHMNIINEHINNNILQPYTQLINMIKDIDNVFIKIQNNKFEQIQKYIEIIKSLEQLNKNINTDNLNKLKDTQNKLINIETEMKHKQKQLINKMNDIEKDNITDQYMHDVQQNIFEPITLKMNEYNTLLNDNHNNNINNEHQFNHLNSLHTKIFSHNYNKEQQQEYITNIMQRIDVFINDLDTYQYEYYFYEWNQEYKQIDKNKINQHINNIKNNLIHVKKQFEHTLENIKNNENIFDNIQLKKKDIDDIIININNTKETYLKELNKKKMLQNKKKVDEKSEINNHHTLQHDNQNVEQKNKIKDHNLITKPNNNSSEESHQNEQMKEQNKNILEKQTRNIKPHHVHNHNHNHNQNQKDSTKLQEQDISTHKLHNTIHEQQSKDNHQGNREKKQKNGNHERMYFASGIVVSILFLSSLGFVINSKNNKQEYDKEQEKQQQNDFVCDNNKMDDKSTQKYGRNQEEVMEISFDNDYI.

The N-terminal stretch at 1–20 (MQRWIFCNIVLHILIYLAEF) is a signal peptide. The Extracellular portion of the chain corresponds to 21–2897 (SHEQESYSSN…KKQKNGNHER (2877 aa)). The disordered stretch occupies residues 30-50 (NEKIRKDYSDDNNYEPTPSYE). 7 N-linked (GlcNAc...) asparagine glycosylation sites follow: N70, N78, N87, N135, N286, N384, and N417. Positions 500–833 (LQIVQQKLLE…MQQGYNNLTN (334 aa)) are erythrocyte binding domain (EBD). LRR repeat units follow at residues 528–553 (YKNI…NIKD) and 607–633 (LNNL…ILQK). N685 is a glycosylation site (N-linked (GlcNAc...) asparagine). LRR repeat units lie at residues 736–758 (IDTI…VYTD) and 785–808 (QETL…LLKE). 4 N-linked (GlcNAc...) asparagine glycosylation sites follow: N830, N892, N1000, and N1010. LRR repeat units lie at residues 993–1018 (LKIL…TLND) and 1356–1381 (LRNI…AHKE). The N-linked (GlcNAc...) asparagine glycan is linked to N1425. The LRR 7 repeat unit spans residues 1466–1489 (AKYMENIDTYKNNIEIISKQINPE). N1496 carries an N-linked (GlcNAc...) asparagine glycan. LRR repeat units follow at residues 1512 to 1537 (YKQI…ELQN), 1586 to 1609 (SQNI…LEEE), and 1611 to 1636 (EQMK…AFIN). N-linked (GlcNAc...) asparagine glycans are attached at residues N1664, N1692, N1718, N1816, and N1844. 2 LRR repeats span residues 1700–1723 (LQEL…TIKY) and 1809–1834 (LKLF…SIQN). The LRR 13 repeat unit spans residues 1880-1903 (QNEIRNMNLEKNFMLDKSKKIDEE). N-linked (GlcNAc...) asparagine glycosylation is found at N1913 and N1918. The stretch at 1944-1967 (KENIEKIKQEINTLSDVFKKPFFF) is one LRR 14 repeat. N-linked (GlcNAc...) asparagine glycans are attached at residues N2054, N2207, N2289, N2300, N2338, and N2405. One copy of the LRR 15 repeat lies at 2523–2548 (IKDIDNVFIKIQNNKFEQIQKYIEII). N-linked (GlcNAc...) asparagine glycosylation is found at N2598 and N2752. One copy of the LRR 16 repeat lies at 2731–2754 (ENIFDNIQLKKKDIDDIIININNT). Composition is skewed to basic and acidic residues over residues 2773 to 2782 (KVDEKSEINN) and 2795 to 2804 (QKNKIKDHNL). Disordered regions lie at residues 2773-2825 (KVDE…MKEQ) and 2840-2862 (HHVH…LQEQ). N2811 carries an N-linked (GlcNAc...) asparagine glycan. The segment covering 2814-2825 (EESHQNEQMKEQ) has biased composition (basic and acidic residues). The chain crosses the membrane as a helical span at residues 2898-2918 (MYFASGIVVSILFLSSLGFVI). Residues 2919 to 2971 (NSKNNKQEYDKEQEKQQQNDFVCDNNKMDDKSTQKYGRNQEEVMEISFDNDYI) are Cytoplasmic-facing.

May in part interact with AMA1 in the moving tight junction between the parasite and the erythrocyte membranes; the interaction may facilitate junction formation and active invasion. Post-translationally, proteolytically processed into multiple fragments following schizont rupture. In the mature schizont stage prior to merozoite release, full length RH1 is processed post-Golgi into a 240 kDa N-terminal form and a 120 kDa C-terminal form containing the transmembrane region. Both forms appear not to form a complex. However, they appear to remain in close proximity in late schizonts. Following merozoite invasion of host erythrocytes, the 240 kDa form is further processed into a 140 kDa form which may be involved in the disengagement of the ligand-receptor complex required during the invasion process. Also, the 120 kDa is further cleaved into a 110 kDa form and a transmembrane 9 kDa form probably by ROM4.

It localises to the cell membrane. The protein resides in the secreted. The protein localises to the cell junction. It is found in the tight junction. Its subcellular location is the cytoplasmic vesicle. It localises to the secretory vesicle. The protein resides in the rhoptry. Functionally, during the asexual blood stage, binds to a sialic acid containing receptor on the surface of the host erythrocyte and thus is involved in merozoite invasion. Binds erythrocytes via a neuraminidase sensitive and trypsin-, chymotrypsin-resistant receptor. After merozoite attachment and reorientation, RH1 binding to its erythrocyte receptor triggers an increase in intracellular Ca(2+) within the parasite resulting in the release of microneme proteins such as EBA175 which in turn leads to the formation of the tight junction between parasite and host cell. This Plasmodium falciparum (isolate 3D7) protein is Reticulocyte-binding protein homolog 1.